The sequence spans 290 residues: Shikimate dehydrogenase (NADP(+)) (290 aa).

Shikimate contacts are provided by residues 24-26 and T71; that span reads SLS. K75 (proton acceptor) is an active-site residue. Shikimate-binding residues include N96 and D111. NADP(+)-binding positions include 136–140, 160–165, and L233; these read GAGGA and NRTVDR. Position 235 (Y235) interacts with shikimate. G256 contributes to the NADP(+) binding site.

This sequence belongs to the shikimate dehydrogenase family. Homodimer.

The catalysed reaction is shikimate + NADP(+) = 3-dehydroshikimate + NADPH + H(+). It participates in metabolic intermediate biosynthesis; chorismate biosynthesis; chorismate from D-erythrose 4-phosphate and phosphoenolpyruvate: step 4/7. Functionally, involved in the biosynthesis of the chorismate, which leads to the biosynthesis of aromatic amino acids. Catalyzes the reversible NADPH linked reduction of 3-dehydroshikimate (DHSA) to yield shikimate (SA). The chain is Shikimate dehydrogenase (NADP(+)) from Methanopyrus kandleri (strain AV19 / DSM 6324 / JCM 9639 / NBRC 100938).